A 428-amino-acid polypeptide reads, in one-letter code: Light-independent protochlorophyllide reductase subunit N (428 aa).

Residues Cys29, Cys54, and Cys115 each coordinate [4Fe-4S] cluster.

Belongs to the BchN/ChlN family. As to quaternary structure, protochlorophyllide reductase is composed of three subunits; BchL, BchN and BchB. Forms a heterotetramer of two BchB and two BchN subunits. [4Fe-4S] cluster serves as cofactor.

It catalyses the reaction chlorophyllide a + oxidized 2[4Fe-4S]-[ferredoxin] + 2 ADP + 2 phosphate = protochlorophyllide a + reduced 2[4Fe-4S]-[ferredoxin] + 2 ATP + 2 H2O. It functions in the pathway porphyrin-containing compound metabolism; bacteriochlorophyll biosynthesis (light-independent). In terms of biological role, component of the dark-operative protochlorophyllide reductase (DPOR) that uses Mg-ATP and reduced ferredoxin to reduce ring D of protochlorophyllide (Pchlide) to form chlorophyllide a (Chlide). This reaction is light-independent. The NB-protein (BchN-BchB) is the catalytic component of the complex. The sequence is that of Light-independent protochlorophyllide reductase subunit N from Cereibacter sphaeroides (strain ATCC 17029 / ATH 2.4.9) (Rhodobacter sphaeroides).